A 344-amino-acid chain; its full sequence is Heat-inducible transcription repressor HrcA (344 aa).

This sequence belongs to the HrcA family.

Its function is as follows. Negative regulator of class I heat shock genes (grpE-dnaK-dnaJ and groELS operons). Prevents heat-shock induction of these operons. The polypeptide is Heat-inducible transcription repressor HrcA (Streptococcus pneumoniae (strain Taiwan19F-14)).